We begin with the raw amino-acid sequence, 363 residues long: 5-formaminoimidazole-4-carboxamide-1-(beta)-D-ribofuranosyl 5'-monophosphate synthetase (363 aa).

The 5-amino-1-(5-phospho-beta-D-ribosyl)imidazole-4-carboxamide site is built by H29 and S96. One can recognise an ATP-grasp domain in the interval 118–354 (RDILRWEAER…IALEIKNAIK (237 aa)). ATP contacts are provided by residues 148–210 (PSEI…CNYC) and E232. Residue N260 coordinates 5-amino-1-(5-phospho-beta-D-ribosyl)imidazole-4-carboxamide. Positions 299 and 312 each coordinate Mg(2+).

This sequence belongs to the phosphohexose mutase family. Requires Mg(2+) as cofactor. Mn(2+) is required as a cofactor.

The enzyme catalyses 5-amino-1-(5-phospho-beta-D-ribosyl)imidazole-4-carboxamide + formate + ATP = 5-formamido-1-(5-phospho-D-ribosyl)imidazole-4-carboxamide + ADP + phosphate. Its pathway is purine metabolism; IMP biosynthesis via de novo pathway; 5-formamido-1-(5-phospho-D-ribosyl)imidazole-4-carboxamide from 5-amino-1-(5-phospho-D-ribosyl)imidazole-4-carboxamide (formate route): step 1/1. Its function is as follows. Catalyzes the ATP- and formate-dependent formylation of 5-aminoimidazole-4-carboxamide-1-beta-d-ribofuranosyl 5'-monophosphate (AICAR) to 5-formaminoimidazole-4-carboxamide-1-beta-d-ribofuranosyl 5'-monophosphate (FAICAR) in the absence of folates. In Methanobrevibacter smithii (strain ATCC 35061 / DSM 861 / OCM 144 / PS), this protein is 5-formaminoimidazole-4-carboxamide-1-(beta)-D-ribofuranosyl 5'-monophosphate synthetase.